A 184-amino-acid chain; its full sequence is METFNHIDIKKYTREDLLYLRNTNNVLFKMFQKQVDEIACLSSKEQKLCGTLTSINNIINENYTIYCLIHTDGLIGFIKIGEKNLYLYDKIKLHYGKCTCVLDFYILEKFQKRGLGIKIFNFMLKDNDISAFCLCYDNPSYKLQNFLKKYFSPCVLIKQPNHFVIFSNYFKNVSIKKVYERISN.

In terms of domain architecture, N-acetyltransferase spans 1 to 170; sequence METFNHIDIK…NHFVIFSNYF (170 aa). Residues 104–117 and 140–149 each bind acetyl-CoA; these read FYIL…GLGI and SYKLQNFLKK.

This sequence belongs to the acetyltransferase ATAT1 family.

The enzyme catalyses L-lysyl-[alpha-tubulin] + acetyl-CoA = N(6)-acetyl-L-lysyl-[alpha-tubulin] + CoA + H(+). In terms of biological role, specifically acetylates 'Lys-40' in alpha-tubulin on the lumenal side of microtubules. Promotes microtubule destabilization and accelerates microtubule dynamics; this activity may be independent of acetylation activity. Acetylates alpha-tubulin with a slow enzymatic rate, due to a catalytic site that is not optimized for acetyl transfer. Enters the microtubule through each end and diffuses quickly throughout the lumen of microtubules. Acetylates only long/old microtubules because of its slow acetylation rate since it does not have time to act on dynamically unstable microtubules before the enzyme is released. This is Alpha-tubulin N-acetyltransferase from Plasmodium falciparum (isolate 3D7).